Reading from the N-terminus, the 90-residue chain is U7-theraphotoxin-Hhn1h (90 aa).

An N-terminal signal peptide occupies residues 1-19 (MKTAIFTVVLALAVFAVLS). A propeptide spanning residues 20 to 50 (FGWEANEKALSEEFTELIHEKEAASETEARE) is cleaved from the precursor. 3 disulfide bridges follow: Cys-51–Cys-65, Cys-58–Cys-70, and Cys-64–Cys-81.

The protein belongs to the neurotoxin 10 (Hwtx-1) family. 13 (Hntx-13) subfamily. In terms of tissue distribution, expressed by the venom gland.

Its subcellular location is the secreted. Its function is as follows. Ion channel inhibitor. This Cyriopagopus hainanus (Chinese bird spider) protein is U7-theraphotoxin-Hhn1h.